Consider the following 160-residue polypeptide: Cyclic pyranopterin monophosphate synthase (160 aa).

Substrate-binding positions include 74-76 (LSH) and 112-113 (ME). Residue D127 is part of the active site.

It belongs to the MoaC family. As to quaternary structure, homohexamer; trimer of dimers.

It catalyses the reaction (8S)-3',8-cyclo-7,8-dihydroguanosine 5'-triphosphate = cyclic pyranopterin phosphate + diphosphate. It participates in cofactor biosynthesis; molybdopterin biosynthesis. In terms of biological role, catalyzes the conversion of (8S)-3',8-cyclo-7,8-dihydroguanosine 5'-triphosphate to cyclic pyranopterin monophosphate (cPMP). This chain is Cyclic pyranopterin monophosphate synthase, found in Geotalea uraniireducens (strain Rf4) (Geobacter uraniireducens).